The sequence spans 593 residues: Transmembrane 9 superfamily member 4 (593 aa).

The N-terminal stretch at 1 to 25 is a signal peptide; the sequence is MVLLPSMTSLLLVFLFLYGVSPVIS. Residues 26–230 are Lumenal-facing; the sequence is DGSDHRYKVG…SMPHHLEIHW (205 aa). A helical transmembrane segment spans residues 231–251; the sequence is FSIINSCVTVLLLTGFLATIL. The Cytoplasmic portion of the chain corresponds to 252-303; the sequence is MRVLKNDFVKYAHDEEAVDDQEETGWKLIHGDVFRFPKHKSLLAAALGSGTQ. Residues 304–324 form a helical membrane-spanning segment; it reads LFTLAVFIFMLALVGVFYPYN. Over 325–326 the chain is Lumenal; that stretch reads RG. Residues 327–347 form a helical membrane-spanning segment; sequence ALFTALVVIYALTSGIAGYTA. Topologically, residues 348 to 366 are cytoplasmic; that stretch reads ASFYCQLEGTNWVRNVILT. The chain crosses the membrane as a helical span at residues 367–387; that stretch reads GSLFCGPLLITFSFLNTVAIA. Topologically, residues 388 to 398 are lumenal; the sequence is YQATAALPFGT. A helical transmembrane segment spans residues 399–419; that stretch reads IVVIFLIWALVTSPLLILGGI. At 420–453 the chain is on the cytoplasmic side; sequence AGKNRKSEFQAPCRTTKYPREIPPMRWYRRTLPQ. The chain crosses the membrane as a helical span at residues 454 to 474; that stretch reads MAMAGFLPFSAIYIELYYIFA. Topologically, residues 475-486 are lumenal; it reads SVWGHRIYTIYS. The chain crosses the membrane as a helical span at residues 487 to 507; sequence ILSIVFLILVIVTAFITVALT. Over 508 to 522 the chain is Cytoplasmic; the sequence is YFQLAAEDHEWWWRS. Residues 523-543 traverse the membrane as a helical segment; it reads LLCGGSTGLFIYAYCLYYYYA. Residues 544-554 are Lumenal-facing; that stretch reads RSDMSGFMQTS. A helical membrane pass occupies residues 555 to 575; that stretch reads FFFGYMACICYGFFLMLGTIG. At 576–593 the chain is on the cytoplasmic side; sequence FCASLLFVRHIYRSIKCE. The Endoplasmic reticulum export signal motif lies at 582 to 587; sequence FVRHIY. The short motif at 591–593 is the Golgi retention signal element; the sequence is KCE.

It belongs to the nonaspanin (TM9SF) (TC 9.A.2) family.

It is found in the endosome membrane. The protein resides in the golgi apparatus membrane. This is Transmembrane 9 superfamily member 4 from Arabidopsis thaliana (Mouse-ear cress).